A 302-amino-acid chain; its full sequence is Acetaldehyde dehydrogenase (302 aa).

12–15 contributes to the NAD(+) binding site; it reads SGNI. The active-site Acyl-thioester intermediate is Cys-127. NAD(+) is bound by residues 158–166 and Asn-276; that span reads SAGPGTRQN.

Belongs to the acetaldehyde dehydrogenase family.

It catalyses the reaction acetaldehyde + NAD(+) + CoA = acetyl-CoA + NADH + H(+). This Geobacillus genomosp. 3 protein is Acetaldehyde dehydrogenase (nahO).